We begin with the raw amino-acid sequence, 345 residues long: MSDKLLYTLARPFLFAIDPEAAHNLTLPALRRAAAMGLTSSIVKPAHDPRTVMGITFPNPVGLAAGLDKDGAYIDGLATLGFGSIEVGTVTPRAQPGNPMPRMFRLPKANAIINRMGFNNGGADAFVANVRSSKFYQNKEGVLGLNIGKNADTPIERAVDDYLICLEKVYPYASYVTVNISSPNTKNLRQLQGASELDALLSQLKEAQQRLSDQHKRYVPIALKIAPDMELEQIQTIAQALLRHKMDGVIATNTTVSREAVKGLKYAEETGGLSGAPVFEASNTVIRALKSELGDALPIIGVGGILSGNDAQAKIAAGASLVQLYTGLIYRGPALVKECAAALHA.

Residues 65 to 69 and T89 each bind FMN; that span reads AGLDK. Position 69 (K69) interacts with substrate. Substrate is bound at residue 114 to 118; sequence NRMGF. N146 and N179 together coordinate FMN. N179 is a binding site for substrate. The active-site Nucleophile is the S182. Position 184 (N184) interacts with substrate. FMN-binding residues include K224 and T252. 253-254 lines the substrate pocket; the sequence is NT. Residues G275, G304, and 325 to 326 contribute to the FMN site; that span reads YT.

The protein belongs to the dihydroorotate dehydrogenase family. Type 2 subfamily. Monomer. It depends on FMN as a cofactor.

The protein localises to the cell membrane. The catalysed reaction is (S)-dihydroorotate + a quinone = orotate + a quinol. It participates in pyrimidine metabolism; UMP biosynthesis via de novo pathway; orotate from (S)-dihydroorotate (quinone route): step 1/1. Catalyzes the conversion of dihydroorotate to orotate with quinone as electron acceptor. The polypeptide is Dihydroorotate dehydrogenase (quinone) (Janthinobacterium sp. (strain Marseille) (Minibacterium massiliensis)).